The sequence spans 494 residues: Aspartyl/glutamyl-tRNA(Asn/Gln) amidotransferase subunit B (494 aa).

Belongs to the GatB/GatE family. GatB subfamily. Heterotrimer of A, B and C subunits.

It carries out the reaction L-glutamyl-tRNA(Gln) + L-glutamine + ATP + H2O = L-glutaminyl-tRNA(Gln) + L-glutamate + ADP + phosphate + H(+). It catalyses the reaction L-aspartyl-tRNA(Asn) + L-glutamine + ATP + H2O = L-asparaginyl-tRNA(Asn) + L-glutamate + ADP + phosphate + 2 H(+). In terms of biological role, allows the formation of correctly charged Asn-tRNA(Asn) or Gln-tRNA(Gln) through the transamidation of misacylated Asp-tRNA(Asn) or Glu-tRNA(Gln) in organisms which lack either or both of asparaginyl-tRNA or glutaminyl-tRNA synthetases. The reaction takes place in the presence of glutamine and ATP through an activated phospho-Asp-tRNA(Asn) or phospho-Glu-tRNA(Gln). In Rhodopseudomonas palustris (strain ATCC BAA-98 / CGA009), this protein is Aspartyl/glutamyl-tRNA(Asn/Gln) amidotransferase subunit B.